The following is a 387-amino-acid chain: ATP phosphoribosyltransferase regulatory subunit (387 aa).

Belongs to the class-II aminoacyl-tRNA synthetase family. HisZ subfamily. As to quaternary structure, heteromultimer composed of HisG and HisZ subunits.

It is found in the cytoplasm. It functions in the pathway amino-acid biosynthesis; L-histidine biosynthesis; L-histidine from 5-phospho-alpha-D-ribose 1-diphosphate: step 1/9. In terms of biological role, required for the first step of histidine biosynthesis. May allow the feedback regulation of ATP phosphoribosyltransferase activity by histidine. The protein is ATP phosphoribosyltransferase regulatory subunit of Psychrobacter cryohalolentis (strain ATCC BAA-1226 / DSM 17306 / VKM B-2378 / K5).